A 101-amino-acid polypeptide reads, in one-letter code: Urease subunit beta (101 aa).

Belongs to the urease beta subunit family. Heterotrimer of UreA (gamma), UreB (beta) and UreC (alpha) subunits. Three heterotrimers associate to form the active enzyme.

The protein localises to the cytoplasm. It carries out the reaction urea + 2 H2O + H(+) = hydrogencarbonate + 2 NH4(+). The protein operates within nitrogen metabolism; urea degradation; CO(2) and NH(3) from urea (urease route): step 1/1. The protein is Urease subunit beta of Paraburkholderia xenovorans (strain LB400).